The chain runs to 93 residues: Small ribosomal subunit protein uS19 (93 aa).

Residues 73-93 (EFSPTRTFRGHVKDDRKSKRR) form a disordered region. A compositionally biased stretch (basic and acidic residues) spans 83–93 (HVKDDRKSKRR).

Belongs to the universal ribosomal protein uS19 family.

Functionally, protein S19 forms a complex with S13 that binds strongly to the 16S ribosomal RNA. This chain is Small ribosomal subunit protein uS19, found in Streptomyces avermitilis (strain ATCC 31267 / DSM 46492 / JCM 5070 / NBRC 14893 / NCIMB 12804 / NRRL 8165 / MA-4680).